A 174-amino-acid chain; its full sequence is UPF0316 protein Dhaf_3052 (174 aa).

3 helical membrane-spanning segments follow: residues 4–24, 35–55, and 59–79; these read ILQFVLIIITINITYVTLTTI, VYASLLSVLEVFIYIMGLSII, and LDSYWNIAAYCCGYGVGVYLG.

Belongs to the UPF0316 family.

Its subcellular location is the cell membrane. This chain is UPF0316 protein Dhaf_3052, found in Desulfitobacterium hafniense (strain DSM 10664 / DCB-2).